Here is a 142-residue protein sequence, read N- to C-terminus: Natriuretic peptides A (142 aa).

Residues 1–23 (MMLKTVIYTGVLFLICNKVLVRA) form the signal peptide. The propeptide occupies 24-112 (DPLYSPYSSK…RLRDLLMAPR (89 aa)). A disordered region spans residues 47–123 (DTLGQDEGND…NRGSSGCFGS (77 aa)). Residues 77–94 (WDRERERQWPASDYKKPQ) are compositionally biased toward basic and acidic residues. Cysteine 120 and cysteine 136 are disulfide-bonded.

This sequence belongs to the natriuretic peptide family. Cleaved upon secretion to produce the functional hormone. As to expression, expressed in heart atrium and to a lower extent in heart ventricle, but not in brain.

The protein localises to the secreted. Hormone playing a key role in cardiovascular homeostasis through regulation of natriuresis, diuresis, and vasodilation. Has a cGMP-stimulating activity. The chain is Natriuretic peptides A (nppa) from Acipenser transmontanus (White sturgeon).